A 401-amino-acid chain; its full sequence is Serine--glyoxylate aminotransferase (401 aa).

Methionine 1 is subject to N-acetylmethionine. Pyridoxal 5'-phosphate contacts are provided by residues 68-70 (TGT), threonine 148, and 200-201 (QK). Lysine 201 provides a ligand contact to 3-hydroxypyruvate. Residue lysine 201 is modified to N6-(pyridoxal phosphate)lysine. Serine 204 is subject to Phosphoserine. Arginine 347 lines the 3-hydroxypyruvate pocket. The Microbody targeting signal signature appears at 399–401 (SRI).

This sequence belongs to the class-V pyridoxal-phosphate-dependent aminotransferase family. As to quaternary structure, forms homodimers. Interacts with RABGAP22. Pyridoxal 5'-phosphate serves as cofactor. In terms of tissue distribution, widely expressed. Preferentially expressed in green, leafy tissues, root cortex and epidermis, developing siliques and dry seeds.

Its subcellular location is the peroxisome. The catalysed reaction is glyoxylate + L-serine = 3-hydroxypyruvate + glycine. It catalyses the reaction glyoxylate + L-alanine = glycine + pyruvate. It carries out the reaction L-serine + pyruvate = 3-hydroxypyruvate + L-alanine. The enzyme catalyses 3-hydroxypyruvate + L-asparagine = 2-oxosuccinamate + L-serine. The catalysed reaction is L-asparagine + glyoxylate = 2-oxosuccinamate + glycine. It catalyses the reaction L-asparagine + pyruvate = 2-oxosuccinamate + L-alanine. Its activity is regulated as follows. Inhibited by aminooxyacetate and beta-chloro-L-alanine, but not by p-hydroxymercuribenzoate. Photorespiratory enzyme that catalyzes transamination reactions with multiple substrates, including asparagine. Functions exclusively as a catabolic enzyme in Asn metabolism. Involved in root development during seedling establishment after seed germination by regulating serine homeostasis and acetate conversion. In Arabidopsis thaliana (Mouse-ear cress), this protein is Serine--glyoxylate aminotransferase.